The following is a 217-amino-acid chain: Urease accessory protein UreG (217 aa).

Over residues methionine 1–proline 18 the composition is skewed to basic residues. A disordered region spans residues methionine 1–valine 24. Position 26-33 (glycine 26–threonine 33) interacts with GTP.

This sequence belongs to the SIMIBI class G3E GTPase family. UreG subfamily. Homodimer. UreD, UreF and UreG form a complex that acts as a GTP-hydrolysis-dependent molecular chaperone, activating the urease apoprotein by helping to assemble the nickel containing metallocenter of UreC. The UreE protein probably delivers the nickel.

Its subcellular location is the cytoplasm. Functionally, facilitates the functional incorporation of the urease nickel metallocenter. This process requires GTP hydrolysis, probably effectuated by UreG. The chain is Urease accessory protein UreG from Paraburkholderia xenovorans (strain LB400).